The primary structure comprises 463 residues: 23S rRNA (uracil(1939)-C(5))-methyltransferase RlmD (463 aa).

The 71-residue stretch at 6–76 folds into the TRAM domain; that stretch reads KSRKPQQPEY…KRLEEAEMVA (71 aa). Residues cysteine 90, cysteine 96, cysteine 99, and cysteine 178 each coordinate [4Fe-4S] cluster. Positions 288, 317, 322, 341, 368, and 389 each coordinate S-adenosyl-L-methionine. Cysteine 415 functions as the Nucleophile in the catalytic mechanism.

It belongs to the class I-like SAM-binding methyltransferase superfamily. RNA M5U methyltransferase family. RlmD subfamily.

The enzyme catalyses uridine(1939) in 23S rRNA + S-adenosyl-L-methionine = 5-methyluridine(1939) in 23S rRNA + S-adenosyl-L-homocysteine + H(+). Catalyzes the formation of 5-methyl-uridine at position 1939 (m5U1939) in 23S rRNA. This is 23S rRNA (uracil(1939)-C(5))-methyltransferase RlmD from Acinetobacter baumannii (strain SDF).